The chain runs to 108 residues: UPF0102 protein Sama_3355 (108 aa).

Belongs to the UPF0102 family.

This is UPF0102 protein Sama_3355 from Shewanella amazonensis (strain ATCC BAA-1098 / SB2B).